We begin with the raw amino-acid sequence, 472 residues long: 3-isopropylmalate dehydratase large subunit (472 aa).

The disordered stretch occupies residues 61–80; that stretch reads TPDHNVPTTQKERASGVEGI. The [4Fe-4S] cluster site is built by cysteine 353, cysteine 414, and cysteine 417.

The protein belongs to the aconitase/IPM isomerase family. LeuC type 1 subfamily. In terms of assembly, heterodimer of LeuC and LeuD. Requires [4Fe-4S] cluster as cofactor.

It carries out the reaction (2R,3S)-3-isopropylmalate = (2S)-2-isopropylmalate. The protein operates within amino-acid biosynthesis; L-leucine biosynthesis; L-leucine from 3-methyl-2-oxobutanoate: step 2/4. Catalyzes the isomerization between 2-isopropylmalate and 3-isopropylmalate, via the formation of 2-isopropylmaleate. The polypeptide is 3-isopropylmalate dehydratase large subunit (Saccharophagus degradans (strain 2-40 / ATCC 43961 / DSM 17024)).